The sequence spans 1803 residues: Transposon Ty4-J Gag-Pol polyprotein (1803 aa).

A coiled-coil region spans residues 39–115 (RKVSIKDEQV…IQLLETNENN (77 aa)). Residues 382–502 (NNHLSPVQNE…KTKMVLSRKY (121 aa)) form a ty4 protease region. Residue Asp-415 is the For protease activity; shared with dimeric partner of the active site. The integrase-type zinc finger-like stretch occupies residues 540 to 600 (AIKPTSSPGF…EPNEFWCQTC (61 aa)). An Integrase catalytic domain is found at 620–787 (TDHEPGSSWC…LPLKAISRQP (168 aa)). Residues Asp-631 and Asp-696 each contribute to the Mg(2+) site. A disordered region spans residues 1224–1250 (KRKRKRHDKNNSLTSYELERDKKRSKK). The 136-residue stretch at 1376 to 1511 (RNMFMKTLDI…DILGMDLVYN (136 aa)) folds into the Reverse transcriptase Ty1/copia-type domain. Mg(2+) contacts are provided by Asp-1384, Asp-1463, Asp-1464, Asp-1645, Glu-1687, and Asp-1721. In terms of domain architecture, RNase H Ty1/copia-type spans 1645 to 1791 (DASVGSEYDA…KRFIQVLKNK (147 aa)).

As to quaternary structure, the protease is a homodimer, whose active site consists of two apposed aspartic acid residues. In terms of processing, proteolytically processed into capsid protein (CA), Ty4 protease (PR), integrase (IN) and reverse transcriptase/ribonuclease H (RT) proteins. Initially, virus-like particles (VLPs) are composed of the structural unprocessed proteins Gag and Gag-Pol, and also contain the host initiator methionine tRNA (tRNA(i)-Met) which serves as a primer for minus-strand DNA synthesis, and a dimer of genomic Ty RNA. Processing of the polyproteins occurs within the particle and proceeds by an ordered pathway, called maturation. First, the protease (PR) is released by autocatalytic cleavage of the Gag-Pol polyprotein, and this cleavage is a prerequisite for subsequent processing at the remaining sites to release the mature structural and catalytic proteins. Maturation takes place prior to the RT reaction and is required to produce transposition-competent VLPs.

The protein resides in the cytoplasm. It localises to the nucleus. It catalyses the reaction DNA(n) + a 2'-deoxyribonucleoside 5'-triphosphate = DNA(n+1) + diphosphate. It carries out the reaction Endonucleolytic cleavage to 5'-phosphomonoester.. Capsid protein (CA) is the structural component of the virus-like particle (VLP), forming the shell that encapsulates the retrotransposons dimeric RNA genome. In terms of biological role, the aspartyl protease (PR) mediates the proteolytic cleavages of the Gag and Gag-Pol polyproteins after assembly of the VLP. Functionally, reverse transcriptase/ribonuclease H (RT) is a multifunctional enzyme that catalyzes the conversion of the retro-elements RNA genome into dsDNA within the VLP. The enzyme displays a DNA polymerase activity that can copy either DNA or RNA templates, and a ribonuclease H (RNase H) activity that cleaves the RNA strand of RNA-DNA heteroduplexes during plus-strand synthesis and hydrolyzes RNA primers. The conversion leads to a linear dsDNA copy of the retrotransposon that includes long terminal repeats (LTRs) at both ends. Its function is as follows. Integrase (IN) targets the VLP to the nucleus, where a subparticle preintegration complex (PIC) containing at least integrase and the newly synthesized dsDNA copy of the retrotransposon must transit the nuclear membrane. Once in the nucleus, integrase performs the integration of the dsDNA into the host genome. The protein is Transposon Ty4-J Gag-Pol polyprotein (TY4B-J) of Saccharomyces cerevisiae (strain ATCC 204508 / S288c) (Baker's yeast).